A 28-amino-acid chain; its full sequence is Potassium channel toxin alpha-KTx 9.10 (28 aa).

3 disulfides stabilise this stretch: cysteine 3–cysteine 19, cysteine 6–cysteine 24, and cysteine 10–cysteine 26.

It belongs to the short scorpion toxin superfamily. Potassium channel inhibitor family. Alpha-KTx 09 subfamily. As to expression, expressed by the venom gland.

The protein resides in the secreted. In terms of biological role, blocks Shaker potassium channels. The protein is Potassium channel toxin alpha-KTx 9.10 of Mesobuthus eupeus (Lesser Asian scorpion).